The following is a 279-amino-acid chain: 2-dehydro-3-deoxyphosphooctonate aldolase (279 aa).

Belongs to the KdsA family.

Its subcellular location is the cytoplasm. The enzyme catalyses D-arabinose 5-phosphate + phosphoenolpyruvate + H2O = 3-deoxy-alpha-D-manno-2-octulosonate-8-phosphate + phosphate. It functions in the pathway carbohydrate biosynthesis; 3-deoxy-D-manno-octulosonate biosynthesis; 3-deoxy-D-manno-octulosonate from D-ribulose 5-phosphate: step 2/3. It participates in bacterial outer membrane biogenesis; lipopolysaccharide biosynthesis. The protein is 2-dehydro-3-deoxyphosphooctonate aldolase of Desulfosudis oleivorans (strain DSM 6200 / JCM 39069 / Hxd3) (Desulfococcus oleovorans).